Here is a 1132-residue protein sequence, read N- to C-terminus: BTB/POZ domain-containing protein 7 (1132 aa).

Residues 1 to 10 show a composition bias toward polar residues; the sequence is MGANASNYPH. The interval 1–24 is disordered; it reads MGANASNYPHSCSPRVGGNSQAQQ. The N-myristoyl glycine moiety is linked to residue glycine 2. BTB domains lie at 142–211 and 247–341; these read TDVD…GMED and YDVV…DLSV. Positions 413–479 constitute a BACK domain; that stretch reads YGSKWVHRQA…WGEHQLMKRI (67 aa). A Phosphoserine modification is found at serine 722. Disordered regions lie at residues 897-1019 and 1035-1132; these read LSQS…HLHR and QRSD…KSAL. Basic residues predominate over residues 918–927; it reads RHTHTSRKKH. Basic and acidic residues-rich tracts occupy residues 928 to 939, 1000 to 1019, 1083 to 1093, and 1105 to 1114; these read TLEQKTDTRENP, KKQE…HLHR, PEERSGRRLAD, and TDLEREDSIS. Position 1012 is a phosphoserine (serine 1012).

It localises to the nucleus. Its function is as follows. Acts as a mediator of epithelial dynamics and organ branching by promoting cleft progression. Induced following accumulation of fibronectin in forming clefts, leading to local expression of the cell-scattering SNAIL2 and suppression of E-cadherin levels, thereby altering cell morphology and reducing cell-cell adhesion. This stimulates cell separation at the base of forming clefts by local, dynamic intercellular gap formation and promotes cleft progression. The polypeptide is BTB/POZ domain-containing protein 7 (BTBD7) (Homo sapiens (Human)).